Here is a 176-residue protein sequence, read N- to C-terminus: ATP-dependent protease subunit HslV (176 aa).

Thr-2 is an active-site residue. Na(+) contacts are provided by Gly-157, Cys-160, and Thr-163.

This sequence belongs to the peptidase T1B family. HslV subfamily. In terms of assembly, a double ring-shaped homohexamer of HslV is capped on each side by a ring-shaped HslU homohexamer. The assembly of the HslU/HslV complex is dependent on binding of ATP.

Its subcellular location is the cytoplasm. It catalyses the reaction ATP-dependent cleavage of peptide bonds with broad specificity.. With respect to regulation, allosterically activated by HslU binding. Its function is as follows. Protease subunit of a proteasome-like degradation complex believed to be a general protein degrading machinery. The protein is ATP-dependent protease subunit HslV of Pseudomonas fluorescens (strain SBW25).